The primary structure comprises 241 residues: Small ribosomal subunit protein uS2 (241 aa).

The protein belongs to the universal ribosomal protein uS2 family.

In Proteus mirabilis (strain HI4320), this protein is Small ribosomal subunit protein uS2.